Reading from the N-terminus, the 644-residue chain is MPSKAENLRPSEPAPQPPEGRTLQGQLPGAPPAQRAGSPPDAPGSESPALACSTPATPSGEDPPARAAPIAPRPPARPRLERALSLDDKGWRRRRFRGSQEDLEARNGTSPSRGSVQSEGPGAPAHSCSPPCLSTSLQEIPKSRGVLSSERGSPSSGGNPLSGVASSSPNLPHRDAAVAGSSPRLPSLLPPRPPPALSLDIASDSLRTANKVDSDLADYKLRAQPLLVRAHSSLGPGRPRSPLACDDCSLRSAKSSFSLLAPIRSKDVRSRSYLEGSLLASGALLGADELARYFPDRNVALFVATWNMQGQKELPPSLDEFLLPAEADYAQDLYVIGVQEGCSDRREWETRLQETLGPHYVLLSSAAHGVLYMSLFIRRDLIWFCSEVECSTVTTRIVSQIKTKGALGISFTFFGTSFLFITSHFTSGDGKVAERLLDYTRTVQALVLPRNVPDTNPYRSSAADVTTRFDEVFWFGDFNFRLSGGRTVVDALLCQGLVVDVPALLQHDQLIREMRKGSIFKGFQEPDIHFLPSYKFDIGKDTYDSTSKQRTPSYTDRVLYRSRHKGDICPVSYSSCPGIKTSDHRPVYGLFRVKVRPGRDNIPLAAGKFDRELYLLGIKRRISKEIQRQQALQSQNSSTICSVS.

The tract at residues 1-193 is disordered; it reads MPSKAENLRP…RLPSLLPPRP (193 aa). 8 tandem repeats follow at residues 10-13, 15-18, 28-31, 39-42, 55-58, 69-71, 72-74, and 75-78. Positions 10–242 are 13 X 4 AA repeats of P-X-X-P; sequence PSEPAPQPPE…SLGPGRPRSP (233 aa). Residues 78–90 show a composition bias toward basic and acidic residues; that stretch reads PRLERALSLDDKG. A Phosphoserine modification is found at serine 99. Positions 107–118 are enriched in polar residues; it reads NGTSPSRGSVQS. Repeat 9 spans residues 121–124; that stretch reads PGAP. A compositionally biased stretch (low complexity) spans 152–163; sequence GSPSSGGNPLSG. 4 tandem repeats follow at residues 169–172, 183–185, 190–193, and 236–239. Serine 241 and serine 256 each carry phosphoserine. Cysteine methyl ester is present on cysteine 641. Cysteine 641 carries the S-farnesyl cysteine lipid modification. The propeptide at 642 to 644 is removed in mature form; it reads SVS.

The protein belongs to the inositol 1,4,5-trisphosphate 5-phosphatase type IV family. As to quaternary structure, interacts (when prenylated) with PDE6D; this is important for normal location in cilia. As to expression, detected in brain, heart, pancreas, testis and spleen.

It is found in the cytoplasm. It localises to the cytoskeleton. Its subcellular location is the cilium axoneme. The protein localises to the golgi apparatus. The protein resides in the golgi stack membrane. It is found in the cell membrane. It localises to the cell projection. Its subcellular location is the ruffle. The protein localises to the nucleus. The enzyme catalyses a 1,2-diacyl-sn-glycero-3-phospho-(1D-myo-inositol-4,5-bisphosphate) + H2O = a 1,2-diacyl-sn-glycero-3-phospho-(1D-myo-inositol 4-phosphate) + phosphate. The catalysed reaction is a 1,2-diacyl-sn-glycero-3-phospho-(1D-myo-inositol-3,4,5-trisphosphate) + H2O = a 1,2-diacyl-sn-glycero-3-phospho-(1D-myo-inositol-3,4-bisphosphate) + phosphate. It carries out the reaction a 1,2-diacyl-sn-glycero-3-phospho-(1D-myo-inositol-3,5-bisphosphate) + H2O = a 1,2-diacyl-sn-glycero-3-phospho-(1D-myo-inositol-3-phosphate) + phosphate. Its activity is regulated as follows. Active in the presence of octyl-glucoside or Triton X-100, but completely inhibited by CTAB. Phosphatidylinositol (PtdIns) phosphatase that specifically hydrolyzes the 5-phosphate of phosphatidylinositol-3,4,5-trisphosphate (PtdIns(3,4,5)P3), phosphatidylinositol 4,5-bisphosphate (PtdIns(4,5)P2) and phosphatidylinositol 3,5-bisphosphate (PtdIns(3,5)P2). Specific for lipid substrates, inactive towards water soluble inositol phosphates. Plays an essential role in the primary cilium by controlling ciliary growth and phosphoinositide 3-kinase (PI3K) signaling and stability. In Homo sapiens (Human), this protein is Phosphatidylinositol polyphosphate 5-phosphatase type IV (INPP5E).